The chain runs to 361 residues: G-protein coupled receptor 52 (361 aa).

The Extracellular portion of the chain corresponds to 1–44 (MNESRWTEWRILNMSSSIVNVSEHHSCPLGFGHYSVEDVCIFET). N-linked (GlcNAc...) asparagine glycosylation is found at Asn2, Asn13, and Asn20. A helical transmembrane segment spans residues 45–65 (VVIVLLTFLIISGNLTVIFVF). Topologically, residues 66 to 81 (HCAPLLHHYTTSYFIQ) are cytoplasmic. Residues 82-102 (TMAYADLLVGVTCLVPTLSLL) form a helical membrane-spanning segment. At 103-115 (HYSTGVHESLTCQ) the chain is on the extracellular side. Cys114 and Cys193 are oxidised to a cystine. A helical membrane pass occupies residues 116 to 136 (VFGYIISVLKSVSMACLACIS). The Cytoplasmic segment spans residues 137–159 (VDRYLAITKPLSYNQLVTPCRLR). The chain crosses the membrane as a helical span at residues 160–180 (ICIIMIWIYSCLIFLPSFFGW). At 181–205 (GKPGYHGDIFEWCATSWLTSAYFTC) the chain is on the extracellular side. Residues 206–226 (FIVCLLYAPAALVVCFTYFHI) form a helical membrane-spanning segment. The Cytoplasmic portion of the chain corresponds to 227-265 (FKICRQHTKEINDRRARFPSHEVEASREAGHSPDRRYAM). A helical membrane pass occupies residues 266 to 286 (VLFRITSVFYMLWLPYIIYFL). At 287-296 (LESSRVLDNP) the chain is on the extracellular side. Residues 297-317 (TLSFLTTWLAISNSFCNCVIY) traverse the membrane as a helical segment. Topologically, residues 318-361 (SLSNSVFRLGLRRLSETMCTSCVCAKDQEAQDPKPRRRANSCSI) are cytoplasmic.

The protein belongs to the G-protein coupled receptor 1 family. In terms of tissue distribution, expressed in brain, especially in striatum. Expressed in the striatum, nucleus accumbens, and lateral globus pallidus.

It is found in the cell membrane. Its function is as follows. G- protein coupled receptor activated by antipsychotics reserpine leading to an increase in intracellular cAMP and its internalization. May play a role in locomotor activity through modulation of dopamine, NMDA and ADORA2A-induced locomotor activity. These behavioral changes are accompanied by modulation of the dopamine receptor signaling pathway in striatum. Modulates HTT level via cAMP-dependent but PKA independent mechanisms throught activation of RAB39B that translocates HTT to the endoplasmic reticulum, thus avoiding proteasome degradation. This Mus musculus (Mouse) protein is G-protein coupled receptor 52.